The primary structure comprises 648 residues: Proton myo-inositol cotransporter (648 aa).

At 1–76 (MSRKASENVE…AARRQFQQDE (76 aa)) the chain is on the cytoplasmic side. Phosphoserine occurs at positions 6, 47, and 50. A helical membrane pass occupies residues 77–97 (TPAFVYVVAVFSALGGFLFGY). Over 98–125 (DTGVVSGAMLLLKRQLSLDALWQELLVS) the chain is Extracellular. Residues 126–146 (STVGAAAVSALAGGALNGVFG) form a helical membrane-spanning segment. At 147 to 148 (RR) the chain is on the cytoplasmic side. A helical membrane pass occupies residues 149–169 (AAILLASALFTAGSAVLAAAN). Topologically, residues 170 to 178 (NKETLLAGR) are extracellular. Residues 179-199 (LVVGLGIGIASMTVPVYIAEV) traverse the membrane as a helical segment. Residues 200–212 (SPPNLRGRLVTIN) lie on the Cytoplasmic side of the membrane. A helical membrane pass occupies residues 213–233 (TLFITGGQFFASVVDGAFSYL). At 234–239 (QKDGWR) the chain is on the extracellular side. A helical membrane pass occupies residues 240-260 (YMLGLAAVPAVIQFFGFLFLP). The Cytoplasmic segment spans residues 261-324 (ESPRWLIQKG…RMLSYPPTRR (64 aa)). A helical membrane pass occupies residues 325–345 (ALIVGCGLQMFQQLSGINTIM). Residues 346-363 (YYSATILQMSGVEDDRLA) lie on the Extracellular side of the membrane. Residues 364–384 (IWLASVTAFTNFIFTLVGVWL) traverse the membrane as a helical segment. The Cytoplasmic portion of the chain corresponds to 385 to 393 (VEKVGRRKL). Residues 394–414 (TFGSLAGTTVALIILALGFVL) form a helical membrane-spanning segment. Residues 415–508 (SAQVSPRITF…NFCPTPYSWT (94 aa)) are Extracellular-facing. N-linked (GlcNAc...) asparagine glycosylation is found at N433, N458, and N485. Residues 509-529 (ALLGLILYLVFFAPGMGPMPW) traverse the membrane as a helical segment. Topologically, residues 530–549 (TVNSEIYPLWARSTGNACSS) are cytoplasmic. A helical membrane pass occupies residues 550-570 (GINWIFNVLVSLTFLHTAEYL). Residues 571–573 (TYY) are Extracellular-facing. The chain crosses the membrane as a helical span at residues 574-594 (GAFFLYAGFAAVGLLFIYGCL). Over 595 to 648 (PETKGKKLEEIESLFDNRLCTCGTSDSDEGRYIEYIRVKGSNYHLSDNDASDVE) the chain is Cytoplasmic. Residues S640 and S645 each carry the phosphoserine modification.

It belongs to the major facilitator superfamily. Sugar transporter (TC 2.A.1.1) family. Glycosylated. Predominantly expressed in the brain.

The protein resides in the cell membrane. It catalyses the reaction myo-inositol(out) + H(+)(out) = myo-inositol(in) + H(+)(in). In terms of biological role, h(+)-myo-inositol cotransporter. Can also transport related stereoisomers. The polypeptide is Proton myo-inositol cotransporter (Homo sapiens (Human)).